Consider the following 258-residue polypeptide: Probable S-methyl-5'-thioinosine phosphorylase (258 aa).

Phosphate is bound at residue 53-54 (RH). M180 serves as a coordination point for substrate. Residue T181 participates in phosphate binding. Substrate is bound at residue 204 to 206 (NQA).

This sequence belongs to the PNP/MTAP phosphorylase family. MTAP subfamily. Homotrimer.

It catalyses the reaction S-methyl-5'-thioinosine + phosphate = 5-(methylsulfanyl)-alpha-D-ribose 1-phosphate + hypoxanthine. It participates in purine metabolism; purine nucleoside salvage. Catalyzes the reversible phosphorylation of S-methyl-5'-thioinosine (MTI) to hypoxanthine and 5-methylthioribose-1-phosphate. Involved in the breakdown of S-methyl-5'-thioadenosine (MTA), a major by-product of polyamine biosynthesis. Catabolism of (MTA) occurs via deamination to MTI and phosphorolysis to hypoxanthine. The protein is Probable S-methyl-5'-thioinosine phosphorylase of Methanosarcina acetivorans (strain ATCC 35395 / DSM 2834 / JCM 12185 / C2A).